A 394-amino-acid chain; its full sequence is Beta-ketothiolase BktB (394 aa).

Cysteine 90 (acyl-thioester intermediate) is an active-site residue. Residues histidine 350 and cysteine 380 each act as proton acceptor in the active site.

The protein belongs to the thiolase-like superfamily. Thiolase family.

It catalyses the reaction an acyl-CoA + acetyl-CoA = a 3-oxoacyl-CoA + CoA. The enzyme catalyses 2 acetyl-CoA = acetoacetyl-CoA + CoA. Functionally, required for efficient production of poly(beta-hydroxybutyrate-co-beta-hydroxyvalerate) (PHBV). Catalyzes the condensation of acetyl-CoA and propionyl-CoA to form beta-ketovaleryl-CoA, and the condensation of two acetyl-CoA molecules to form acetoacetyl-CoA. This is Beta-ketothiolase BktB (bktB) from Cupriavidus necator (strain ATCC 17699 / DSM 428 / KCTC 22496 / NCIMB 10442 / H16 / Stanier 337) (Ralstonia eutropha).